The sequence spans 429 residues: Histidine--tRNA ligase (429 aa).

The protein belongs to the class-II aminoacyl-tRNA synthetase family. Homodimer.

It localises to the cytoplasm. The catalysed reaction is tRNA(His) + L-histidine + ATP = L-histidyl-tRNA(His) + AMP + diphosphate + H(+). The polypeptide is Histidine--tRNA ligase (Streptococcus pneumoniae (strain JJA)).